The chain runs to 228 residues: MWCNPIICALDTYDINHALRLTKMLYGKISMVKLGLEFFTAHGLSGVQAVSDCGIPIFLDLKLHDIPNTVGKAISVIKSLNIAMLTIHISGGRDMMLSAIDSIFGSMIKLIGVTVLTSIDDSDLKDIGIDRSSIQHVMLLSKVAQEIGLYGIVCSAFEVQEVRNQCGKDFKLVVPGIRFEDDYSDQKRVKNPKDAILAGADYLVIGRPITMSSDPIQTVDAILSSINL.

Substrate contacts are provided by residues aspartate 11, lysine 33, 60 to 69 (DLKLHDIPNT), threonine 117, arginine 178, glutamine 186, glycine 206, and arginine 207. Lysine 62 serves as the catalytic Proton donor.

The protein belongs to the OMP decarboxylase family. Type 1 subfamily. As to quaternary structure, homodimer.

The catalysed reaction is orotidine 5'-phosphate + H(+) = UMP + CO2. It functions in the pathway pyrimidine metabolism; UMP biosynthesis via de novo pathway; UMP from orotate: step 2/2. In terms of biological role, catalyzes the decarboxylation of orotidine 5'-monophosphate (OMP) to uridine 5'-monophosphate (UMP). In Ehrlichia canis (strain Jake), this protein is Orotidine 5'-phosphate decarboxylase.